The chain runs to 250 residues: NAD(P)H-quinone oxidoreductase subunit K (250 aa).

[4Fe-4S] cluster-binding residues include C60, C61, C125, and C156. The tract at residues 230–250 (ELNTPEIDVSPASQSSSTYES) is disordered. Positions 240–250 (PASQSSSTYES) are enriched in polar residues.

Belongs to the complex I 20 kDa subunit family. NDH-1 can be composed of about 15 different subunits; different subcomplexes with different compositions have been identified which probably have different functions. [4Fe-4S] cluster serves as cofactor.

It is found in the cellular thylakoid membrane. It carries out the reaction a plastoquinone + NADH + (n+1) H(+)(in) = a plastoquinol + NAD(+) + n H(+)(out). The catalysed reaction is a plastoquinone + NADPH + (n+1) H(+)(in) = a plastoquinol + NADP(+) + n H(+)(out). In terms of biological role, NDH-1 shuttles electrons from an unknown electron donor, via FMN and iron-sulfur (Fe-S) centers, to quinones in the respiratory and/or the photosynthetic chain. The immediate electron acceptor for the enzyme in this species is believed to be plastoquinone. Couples the redox reaction to proton translocation, and thus conserves the redox energy in a proton gradient. Cyanobacterial NDH-1 also plays a role in inorganic carbon-concentration. This chain is NAD(P)H-quinone oxidoreductase subunit K, found in Prochlorococcus marinus (strain MIT 9313).